A 710-amino-acid chain; its full sequence is Polyribonucleotide nucleotidyltransferase (710 aa).

Residues Asp488 and Asp494 each contribute to the Mg(2+) site. One can recognise a KH domain in the interval 555–615 (PVIKVISIDP…EKVDAAIEQI (61 aa)). The S1 motif domain occupies 625–688 (GDVFSGKVTR…NLGRLQLEEF (64 aa)). Residues 688–710 (FSDSPDHKHGEKRSFKRHRKNDN) are disordered. The span at 691–700 (SPDHKHGEKR) shows a compositional bias: basic and acidic residues. Residues 701–710 (SFKRHRKNDN) are compositionally biased toward basic residues.

This sequence belongs to the polyribonucleotide nucleotidyltransferase family. Requires Mg(2+) as cofactor.

Its subcellular location is the cytoplasm. The catalysed reaction is RNA(n+1) + phosphate = RNA(n) + a ribonucleoside 5'-diphosphate. In terms of biological role, involved in mRNA degradation. Catalyzes the phosphorolysis of single-stranded polyribonucleotides processively in the 3'- to 5'-direction. The polypeptide is Polyribonucleotide nucleotidyltransferase (Pseudothermotoga lettingae (strain ATCC BAA-301 / DSM 14385 / NBRC 107922 / TMO) (Thermotoga lettingae)).